The chain runs to 1190 residues: Wings apart-like protein homolog (1190 aa).

2 disordered regions span residues 1 to 23 and 46 to 82; these read MTSR…FDEV and QKRP…DESL. The interval 1-659 is mediates interaction with the cohesin complex; the sequence is MTSRFGKTYS…ENQEFTDDIE (659 aa). Over residues 54–66 the composition is skewed to basic and acidic residues; sequence DIQEIPKKPKVEE. Positions 73–75 match the FGF motif 1 motif; that stretch reads FGF. Position 77 is a phosphoserine (S77). At K168 the chain carries N6-acetyllysine. 3 positions are modified to phosphoserine: S221, S223, and S226. The stretch at 260–286 forms a coiled coil; sequence LLEMKDDDFKNRLENLNEAIEEDIVQS. A phosphoserine mark is found at S347 and S380. An FGF motif 2 motif is present at residues 429 to 431; the sequence is FGF. S443 bears the Phosphoserine mark. The FGF motif 3 signature appears at 453 to 455; that stretch reads FGF. 2 positions are modified to phosphoserine: S459 and S461. Residues 459–469 show a composition bias toward acidic residues; the sequence is SESEDDEDDDC. The disordered stretch occupies residues 459–553; the sequence is SESEDDEDDD…SGPKRSPTKA (95 aa). Polar residues predominate over residues 494-509; that stretch reads SNDNSQDSQSGTNNAE. The segment covering 531–540 has biased composition (basic and acidic residues); it reads QGDKSKENTR. The region spanning 626 to 1169 is the WAPL domain; that stretch reads RREDKELYTV…KKFLSFMNLT (544 aa). Residues 749–782 adopt a coiled-coil conformation; it reads ELEQDASSAKLLNEKDMNKIKEKIRRLCETVHNK. S904 is subject to Phosphoserine.

It belongs to the WAPL family. In terms of assembly, interacts with the cohesin complex throughout the cell cycle; interacts with both chromatin-bound and soluble pools of the complex. Interacts with RAD21; the interaction is direct. Interacts with PDS5A; the interaction is direct, cohesin-dependent and competitive with CDCA5/SORORIN. Interacts (via FGF motifs) with PDS5B; the interaction is direct. Interacts with a SMC1 protein (SMC1A or SMC1B) and SMC3. (Microbial infection) Isoform 2 interacts with Epstein-Barr virus EBNA2. Post-translationally, deubiquitinated by USP37; leading to stabilization. As to expression, isoform 1 is highly expressed in uterine cervix tumor. Isoform 2 is widely expressed with a high level in skeletal muscle and heart.

It is found in the nucleus. Its subcellular location is the chromosome. The protein localises to the cytoplasm. Its function is as follows. Regulator of sister chromatid cohesion in mitosis which negatively regulates cohesin association with chromatin. Involved in both sister chromatid cohesion during interphase and sister-chromatid resolution during early stages of mitosis. Couples DNA replication to sister chromatid cohesion. Cohesion ensures that chromosome partitioning is accurate in both meiotic and mitotic cells and plays an important role in DNA repair. This is Wings apart-like protein homolog from Homo sapiens (Human).